The sequence spans 280 residues: Elongation factor Ts (280 aa).

An involved in Mg(2+) ion dislocation from EF-Tu region spans residues 79–82 (TDFV).

Belongs to the EF-Ts family.

It is found in the cytoplasm. Its function is as follows. Associates with the EF-Tu.GDP complex and induces the exchange of GDP to GTP. It remains bound to the aminoacyl-tRNA.EF-Tu.GTP complex up to the GTP hydrolysis stage on the ribosome. The chain is Elongation factor Ts from Treponema denticola (strain ATCC 35405 / DSM 14222 / CIP 103919 / JCM 8153 / KCTC 15104).